A 389-amino-acid polypeptide reads, in one-letter code: Histidinol-phosphate aminotransferase (389 aa).

At Lys233 the chain carries N6-(pyridoxal phosphate)lysine.

It belongs to the class-II pyridoxal-phosphate-dependent aminotransferase family. The cofactor is pyridoxal 5'-phosphate.

The enzyme catalyses L-histidinol phosphate + 2-oxoglutarate = 3-(imidazol-4-yl)-2-oxopropyl phosphate + L-glutamate. It functions in the pathway amino-acid biosynthesis; L-histidine biosynthesis; L-histidine from 5-phospho-alpha-D-ribose 1-diphosphate: step 7/9. The protein is Histidinol-phosphate aminotransferase (HIS5) of Candida maltosa (Yeast).